Reading from the N-terminus, the 113-residue chain is Carboxysome shell protein CcmK4 (113 aa).

Positions 5-91 (AIGSLETKGF…PHENVEAVFP (87 aa)) constitute a BMC domain.

Belongs to the bacterial microcompartments protein family. CcmK subfamily. As to quaternary structure, homohexamer. Interacts stably with CcmK3, probably forms heterohexamers with a 1:2 CcmK3:CcmK4 stoichiometry.

It is found in the carboxysome. In terms of biological role, one of the shell proteins of the carboxysome, a polyhedral inclusion where RuBisCO (ribulose bisphosphate carboxylase, rbcL-rbcS) is sequestered. Assembles into hexamers which make sheets that form the facets of the polyhedral carboxysome. The hexamer central pore probably regulates metabolite flux. A minor shell protein of the carboxysome, a polyhedral inclusion where RuBisCO (ribulose bisphosphate carboxylase, rbcL-rbcS) is sequestered. Hexamers form sheets that form the facets of the polyhedral carboxysome. The shell is 4.5 nm thick, as observed for CcmK proteins. In PCC 7942 there are several CcmK paralogs with presumably functional differences; replacing the central pore residues (34-37) with those of CcmK2 from this organism (Tyr-Glu-Lys-Ile) allows the bacterium to make carboxysomes, but the expression level is too low to know if the carboxysome is functional for CO(2) fixation. This subunit probably makes both homohexamers and heterohexamers with CcmK3. The CcmK3-CcmK4 heterohexmers have been suggested to cap other hexamers, perhaps to alter metabolite flux. This is Carboxysome shell protein CcmK4 from Synechococcus elongatus (strain ATCC 33912 / PCC 7942 / FACHB-805) (Anacystis nidulans R2).